We begin with the raw amino-acid sequence, 217 residues long: 3,4-dihydroxy-2-butanone 4-phosphate synthase (217 aa).

D-ribulose 5-phosphate contacts are provided by residues 37–38 (RE), Asp42, 150–154 (RRGHT), and Glu174. Glu38 is a binding site for Mg(2+). His153 contacts Mg(2+).

This sequence belongs to the DHBP synthase family. In terms of assembly, homodimer. Mg(2+) is required as a cofactor. Requires Mn(2+) as cofactor.

It catalyses the reaction D-ribulose 5-phosphate = (2S)-2-hydroxy-3-oxobutyl phosphate + formate + H(+). It participates in cofactor biosynthesis; riboflavin biosynthesis; 2-hydroxy-3-oxobutyl phosphate from D-ribulose 5-phosphate: step 1/1. Its function is as follows. Catalyzes the conversion of D-ribulose 5-phosphate to formate and 3,4-dihydroxy-2-butanone 4-phosphate. This Shewanella putrefaciens (strain CN-32 / ATCC BAA-453) protein is 3,4-dihydroxy-2-butanone 4-phosphate synthase.